Consider the following 365-residue polypeptide: 3-isopropylmalate dehydrogenase (365 aa).

Residues R96, R106, R134, and D224 each coordinate substrate. D224, D248, and D252 together coordinate Mg(2+). Residue 288-300 (GSAPTIAKQNIAN) participates in NAD(+) binding.

The protein belongs to the isocitrate and isopropylmalate dehydrogenases family. LeuB type 1 subfamily. In terms of assembly, homodimer. Mg(2+) serves as cofactor. It depends on Mn(2+) as a cofactor.

The protein localises to the cytoplasm. It catalyses the reaction (2R,3S)-3-isopropylmalate + NAD(+) = 4-methyl-2-oxopentanoate + CO2 + NADH. It participates in amino-acid biosynthesis; L-leucine biosynthesis; L-leucine from 3-methyl-2-oxobutanoate: step 3/4. In terms of biological role, catalyzes the oxidation of 3-carboxy-2-hydroxy-4-methylpentanoate (3-isopropylmalate) to 3-carboxy-4-methyl-2-oxopentanoate. The product decarboxylates to 4-methyl-2 oxopentanoate. This chain is 3-isopropylmalate dehydrogenase, found in Dehalococcoides mccartyi (strain CBDB1).